We begin with the raw amino-acid sequence, 163 residues long: Protein MATERNALLY EXPRESSED GENE 5 (163 aa).

The region spanning 38–117 (STLYIEGLPA…DDVNVSAPAE (80 aa)) is the RRM domain. Intrachain disulfides connect cysteine 140-cysteine 162 and cysteine 143-cysteine 151.

The protein belongs to the MEG family. In terms of tissue distribution, ubiquitous.

The chain is Protein MATERNALLY EXPRESSED GENE 5 (MEG5) from Zea mays (Maize).